The primary structure comprises 423 residues: Glutamate-1-semialdehyde 2,1-aminomutase (423 aa).

Residue K262 is modified to N6-(pyridoxal phosphate)lysine.

This sequence belongs to the class-III pyridoxal-phosphate-dependent aminotransferase family. HemL subfamily. In terms of assembly, homodimer. The cofactor is pyridoxal 5'-phosphate.

It localises to the cytoplasm. It catalyses the reaction (S)-4-amino-5-oxopentanoate = 5-aminolevulinate. It participates in porphyrin-containing compound metabolism; protoporphyrin-IX biosynthesis; 5-aminolevulinate from L-glutamyl-tRNA(Glu): step 2/2. In Campylobacter fetus subsp. fetus (strain 82-40), this protein is Glutamate-1-semialdehyde 2,1-aminomutase.